A 143-amino-acid chain; its full sequence is MALERTFSIIKPDAVAKNVIGAIYNRFESAGLRIVASKMIHMSKEQAEGFYAEHKERPFFGALVDFMTSGPVMVQVLEGENAVLANREIMGATNPADAASGTLRSDYAASIDENAVHGSDAPESAAREIAYFFSEEEICPRTR.

ATP-binding residues include K11, F59, R87, T93, R104, and N114. The Pros-phosphohistidine intermediate role is filled by H117.

It belongs to the NDK family. In terms of assembly, homotetramer. Requires Mg(2+) as cofactor.

The protein localises to the cytoplasm. The catalysed reaction is a 2'-deoxyribonucleoside 5'-diphosphate + ATP = a 2'-deoxyribonucleoside 5'-triphosphate + ADP. It catalyses the reaction a ribonucleoside 5'-diphosphate + ATP = a ribonucleoside 5'-triphosphate + ADP. Functionally, major role in the synthesis of nucleoside triphosphates other than ATP. The ATP gamma phosphate is transferred to the NDP beta phosphate via a ping-pong mechanism, using a phosphorylated active-site intermediate. This is Nucleoside diphosphate kinase from Alteromonas mediterranea (strain DSM 17117 / CIP 110805 / LMG 28347 / Deep ecotype).